The primary structure comprises 465 residues: Argininosuccinate lyase (465 aa).

Belongs to the lyase 1 family. Argininosuccinate lyase subfamily.

The protein resides in the cytoplasm. The catalysed reaction is 2-(N(omega)-L-arginino)succinate = fumarate + L-arginine. It participates in amino-acid biosynthesis; L-arginine biosynthesis; L-arginine from L-ornithine and carbamoyl phosphate: step 3/3. The protein is Argininosuccinate lyase of Hyphomonas neptunium (strain ATCC 15444).